We begin with the raw amino-acid sequence, 396 residues long: Elongation factor Tu (396 aa).

The region spanning 10–206 (KPHVNIGTIG…AVDSYIPDPE (197 aa)) is the tr-type G domain. Positions 19–26 (GHVDHGKT) are G1. 19–26 (GHVDHGKT) provides a ligand contact to GTP. T26 contacts Mg(2+). The interval 60-64 (GITIA) is G2. The G3 stretch occupies residues 81–84 (DCPG). Residues 81–85 (DCPGH) and 136–139 (NKAD) contribute to the GTP site. The G4 stretch occupies residues 136–139 (NKAD). The G5 stretch occupies residues 174 to 176 (SAL).

The protein belongs to the TRAFAC class translation factor GTPase superfamily. Classic translation factor GTPase family. EF-Tu/EF-1A subfamily. As to quaternary structure, monomer.

It localises to the cytoplasm. The enzyme catalyses GTP + H2O = GDP + phosphate + H(+). Functionally, GTP hydrolase that promotes the GTP-dependent binding of aminoacyl-tRNA to the A-site of ribosomes during protein biosynthesis. In Pelobacter propionicus (strain DSM 2379 / NBRC 103807 / OttBd1), this protein is Elongation factor Tu.